Here is a 291-residue protein sequence, read N- to C-terminus: BTB/POZ domain-containing protein 19 (291 aa).

The BTB domain maps to 29-98 (SDVCFVVGQE…LYTNSVKLYR (70 aa)). The region spanning 134-234 (CEALQVAVTF…LALLAPAELS (101 aa)) is the BACK domain.

The polypeptide is BTB/POZ domain-containing protein 19 (BTBD19) (Homo sapiens (Human)).